A 587-amino-acid polypeptide reads, in one-letter code: Potassium-transporting ATPase potassium-binding subunit (587 aa).

Helical transmembrane passes span 1–21 (MSTSVAGVLAVALLVAALWVT), 60–80 (PVYARSVLAFSLVSVLLLYLL), 89–109 (LNLGFGAVGPALAWNTAVSFM), and 131–151 (GLAVQNFVSAAVGIAVAIAVV). The disordered stretch occupies residues 162-188 (AVGGPGGPNGPGGPGGPNGPGAGSRDD). The segment covering 164 to 183 (GGPGGPNGPGGPGGPNGPGA) has biased composition (gly residues). 7 helical membrane-spanning segments follow: residues 208–228 (IRILLPVCVIAAIVLVAGGAI), 280–300 (PTSWTNLVEIFLLLAIAFSLP), 314–334 (LAIVAVMAVLALGSFAVNAAF), 409–429 (GLYGMLVLAVVTVFVAGLMIG), 449–469 (LYFLATPAIALLGTGVAMGLP), 514–534 (ALGLAMLFGRLLPMLLVLGMA), and 557–577 (FAGMLGAIALIIVALTFFPAL).

This sequence belongs to the KdpA family. The system is composed of three essential subunits: KdpA, KdpB and KdpC.

The protein resides in the cell membrane. Part of the high-affinity ATP-driven potassium transport (or Kdp) system, which catalyzes the hydrolysis of ATP coupled with the electrogenic transport of potassium into the cytoplasm. This subunit binds the extracellular potassium ions and delivers the ions to the membrane domain of KdpB through an intramembrane tunnel. In Frankia alni (strain DSM 45986 / CECT 9034 / ACN14a), this protein is Potassium-transporting ATPase potassium-binding subunit.